Consider the following 325-residue polypeptide: Aldo-keto reductase family 1 member A1 (325 aa).

Ala-2 is subject to N-acetylalanine. The residue at position 4 (Ser-4) is a Phosphoserine. Residues Gly-11–Gly-20, Thr-21, Trp-22, and Asp-45 contribute to the NADP(+) site. Tyr-50 serves as the catalytic Proton donor. The residue at position 127 (Lys-127) is an N6-acetyllysine; alternate. N6-succinyllysine; alternate is present on Lys-127. Lys-145 is subject to N6-succinyllysine. NADP(+) contacts are provided by Ser-162, Asn-163, Ser-211, Leu-213, Ser-215, Ser-216, Lys-263, Ser-264, Val-265, Thr-266, Arg-269, Gln-272, and Asn-273. Ser-211 bears the Phosphoserine mark.

It belongs to the aldo/keto reductase family. As to quaternary structure, monomer.

It is found in the cytoplasm. The protein localises to the cytosol. It localises to the apical cell membrane. The enzyme catalyses a primary alcohol + NADP(+) = an aldehyde + NADPH + H(+). It catalyses the reaction glycerol + NADP(+) = D-glyceraldehyde + NADPH + H(+). The catalysed reaction is glycerol + NADP(+) = L-glyceraldehyde + NADPH + H(+). It carries out the reaction L-gulonate + NADP(+) = aldehydo-D-glucuronate + NADPH + H(+). The enzyme catalyses L-gulono-1,4-lactone + NADP(+) = D-glucurono-3,6-lactone + NADPH + H(+). It catalyses the reaction allyl alcohol + NADP(+) = acrolein + NADPH + H(+). The catalysed reaction is hydroxyacetone + NADP(+) = methylglyoxal + NADPH + H(+). It carries out the reaction 3-deoxyfructose + NADP(+) = 3-deoxyglucosone + NADPH + H(+). The enzyme catalyses (R)-mevalonate + NADP(+) = (R)-mevaldate + NADPH + H(+). It catalyses the reaction pyridine 3-methanol + NADP(+) = pyridine-3-carbaldehyde + NADPH + H(+). The catalysed reaction is S-nitroso-CoA + NADPH + H(+) = sulfinamide-CoA + NADP(+). It carries out the reaction S-nitrosoglutathione + NADPH + H(+) = S-(hydroxysulfenamide)glutathione + NADP(+). Catalyzes the NADPH-dependent reduction of a wide variety of carbonyl-containing compounds to their corresponding alcohols. Displays enzymatic activity towards endogenous metabolites such as aromatic and aliphatic aldehydes, ketones, monosaccharides and bile acids, with a preference for negatively charged substrates, such as glucuronate and succinic semialdehyde. Plays an important role in ascorbic acid biosynthesis by catalyzing the reduction of D-glucuronic acid and D-glucurono-gamma-lactone. Functions as a detoxifiying enzyme by reducing a range of toxic aldehydes. Reduces methylglyoxal and 3-deoxyglucosone, which are present at elevated levels under hyperglycemic conditions and are cytotoxic. Involved also in the detoxification of lipid-derived aldehydes like acrolein. Plays a role in the activation of procarcinogens, such as polycyclic aromatic hydrocarbon trans-dihydrodiols, and in the metabolism of various xenobiotics and drugs. Also acts as an inhibitor of protein S-nitrosylation by mediating degradation of S-nitroso-coenzyme A (S-nitroso-CoA), a cofactor required to S-nitrosylate proteins. S-nitroso-CoA reductase activity is involved in reprogramming intermediary metabolism in renal proximal tubules, notably by inhibiting protein S-nitrosylation of isoform 2 of PKM (PKM2). Also acts as a S-nitroso-glutathione reductase by catalyzing the NADPH-dependent reduction of S-nitrosoglutathione. Displays no reductase activity towards retinoids. In Sus scrofa (Pig), this protein is Aldo-keto reductase family 1 member A1 (AKR1A1).